A 178-amino-acid chain; its full sequence is Gamma-crystallin S (178 aa).

Serine 2 carries the N-acetylserine modification. Residues 2–5 (SKSV) are N-terminal arm. 2 consecutive Beta/gamma crystallin 'Greek key' domains span residues 6 to 44 (AKITFYDDKNFQGHHYECDSDCPDFHTYLSCCNSIRVTG) and 45 to 87 (GAWV…KVIH). The interval 88 to 93 (LSSGGQ) is connecting peptide. Beta/gamma crystallin 'Greek key' domains lie at 94 to 134 (YKLQ…KVLD) and 135 to 177 (GVWV…RRIM).

The protein belongs to the beta/gamma-crystallin family. Monomer.

Crystallins are the dominant structural components of the vertebrate eye lens. The chain is Gamma-crystallin S (CRYGS) from Macropus fuliginosus (Western gray kangaroo).